A 113-amino-acid chain; its full sequence is Large ribosomal subunit protein bL19 (113 aa).

Belongs to the bacterial ribosomal protein bL19 family.

Its function is as follows. This protein is located at the 30S-50S ribosomal subunit interface and may play a role in the structure and function of the aminoacyl-tRNA binding site. The chain is Large ribosomal subunit protein bL19 from Corynebacterium glutamicum (strain R).